The primary structure comprises 429 residues: GDP-fucose protein O-fucosyltransferase 2 (429 aa).

Positions 1–21 are cleaved as a signal peptide; the sequence is MATLSFVFLLLGAVSWPPASA. 53 to 57 lines the GDP-beta-L-fucose pocket; the sequence is PEGFN. Catalysis depends on Glu-54, which acts as the Proton acceptor. The cysteines at positions 161 and 192 are disulfide-linked. 3 N-linked (GlcNAc...) asparagine glycosylation sites follow: Asn-189, Asn-209, and Asn-259. GDP-beta-L-fucose contacts are provided by residues 292-294, Asp-371, and 388-389; these read HLR and TF. Cys-412 and Cys-419 are disulfide-bonded.

The protein belongs to the glycosyltransferase 68 family. In terms of tissue distribution, isoform A is expressed in fetal liver and peripheral blood lymphocytes. Isoform B is expressed in spleen, lung, testis, bone marrow, thymus, pancreas, prostate, fetal brain, fetal liver and fetal kidney. Isoform C is expressed in brain, heart, spleen, liver, lung, stomach, testis, placenta, skin, thymus, pancreas, mammary gland, prostate, fetal brain, fetal liver and fetal heart.

It localises to the endoplasmic reticulum. The protein localises to the golgi apparatus. The enzyme catalyses L-seryl-[protein] + GDP-beta-L-fucose = 3-O-(alpha-L-fucosyl)-L-seryl-[protein] + GDP + H(+). It catalyses the reaction L-threonyl-[protein] + GDP-beta-L-fucose = 3-O-(alpha-L-fucosyl)-L-threonyl-[protein] + GDP + H(+). The protein operates within protein modification; protein glycosylation. Its activity is regulated as follows. Inhibited by EDTA and by Zn(2+). In terms of biological role, catalyzes the reaction that attaches fucose through an O-glycosidic linkage to a conserved serine or threonine residue in the consensus sequence C1-X-X-S/T-C2 of thrombospondin type I repeats (TSRs) where C1 and C2 are the first and second cysteines of the repeat, respectively. O-fucosylates members of several protein families including the ADAMTS, the thrombospondin (TSP) and spondin families. Required for the proper secretion of ADAMTS family members such as ADAMTSL1 and ADAMTS13. The O-fucosylation of TSRs is also required for restricting epithelial to mesenchymal transition (EMT), maintaining the correct patterning of mesoderm and localization of the definite endoderm. The sequence is that of GDP-fucose protein O-fucosyltransferase 2 (POFUT2) from Homo sapiens (Human).